The sequence spans 280 residues: Sulfur carrier protein FdhD (280 aa).

The Cysteine persulfide intermediate role is filled by C121. A Mo-bis(molybdopterin guanine dinucleotide)-binding site is contributed by 258–263 (FSRPGR).

The protein belongs to the FdhD family.

It localises to the cytoplasm. Its function is as follows. Required for formate dehydrogenase (FDH) activity. Acts as a sulfur carrier protein that transfers sulfur from IscS to the molybdenum cofactor prior to its insertion into FDH. In Cronobacter sakazakii (strain ATCC BAA-894) (Enterobacter sakazakii), this protein is Sulfur carrier protein FdhD.